A 388-amino-acid polypeptide reads, in one-letter code: Alanine racemase (388 aa).

Residue Lys44 is the Proton acceptor; specific for D-alanine of the active site. Residue Lys44 is modified to N6-(pyridoxal phosphate)lysine. Residue Arg142 coordinates substrate. Residue Tyr273 is the Proton acceptor; specific for L-alanine of the active site. Met321 contacts substrate.

It belongs to the alanine racemase family. The cofactor is pyridoxal 5'-phosphate.

The enzyme catalyses L-alanine = D-alanine. Its pathway is amino-acid biosynthesis; D-alanine biosynthesis; D-alanine from L-alanine: step 1/1. Functionally, catalyzes the interconversion of L-alanine and D-alanine. May also act on other amino acids. This is Alanine racemase (alr) from Mycobacterium ulcerans (strain Agy99).